A 1021-amino-acid chain; its full sequence is Peroxisomal ATPase PEX6 (1021 aa).

Residue 763 to 770 (GPPGTGKT) coordinates ATP.

The protein belongs to the AAA ATPase family. Interacts with PEX1; forming the PEX1-PEX6 AAA ATPase complex, which is composed of a heterohexamer formed by a trimer of PEX1-PEX6 dimers.

Its subcellular location is the cytoplasm. It localises to the cytosol. The protein localises to the peroxisome membrane. The catalysed reaction is ATP + H2O = ADP + phosphate + H(+). Its function is as follows. Component of the PEX1-PEX6 AAA ATPase complex, a protein dislocase complex that mediates the ATP-dependent extraction of the PEX5 receptor from peroxisomal membranes, an essential step for PEX5 recycling. Specifically recognizes PEX5 monoubiquitinated at 'Cys-6', and pulls it out of the peroxisome lumen through the PEX2-PEX10-PEX12 retrotranslocation channel. Extraction by the PEX1-PEX6 AAA ATPase complex is accompanied by unfolding of the TPR repeats and release of bound cargo from PEX5. In Eremothecium gossypii (strain ATCC 10895 / CBS 109.51 / FGSC 9923 / NRRL Y-1056) (Yeast), this protein is Peroxisomal ATPase PEX6 (PEX6).